The following is a 172-amino-acid chain: MNLQDNIRIVEGFPKKGISFKDITTLIRDKDAFKYAVDKIAGYLKDKNIDVVVGPEARGFLFGAPIAYTLGAGFVPVRKQGKLPYDTLSIKYDLEYGSDVLQIHKDAINKGDRVALVDDLLATGGTTSSVVKLIEQAGGEIVTIDFVIELTDLKGREKLKGYDVLSLIKYDI.

The protein belongs to the purine/pyrimidine phosphoribosyltransferase family. Homodimer.

Its subcellular location is the cytoplasm. It catalyses the reaction AMP + diphosphate = 5-phospho-alpha-D-ribose 1-diphosphate + adenine. It functions in the pathway purine metabolism; AMP biosynthesis via salvage pathway; AMP from adenine: step 1/1. Functionally, catalyzes a salvage reaction resulting in the formation of AMP, that is energically less costly than de novo synthesis. In Clostridium kluyveri (strain NBRC 12016), this protein is Adenine phosphoribosyltransferase.